Consider the following 326-residue polypeptide: Vomeronasal type-1 receptor 94 (326 aa).

Residues 1–32 (MSEILLFSPQPLFSYTMNKYSRLYTNSNIRNT) lie on the Extracellular side of the membrane. A helical membrane pass occupies residues 33-53 (FFSEIGIGIAANSLLLLFHIF). The Cytoplasmic portion of the chain corresponds to 54–65 (KFIRGQRSRLTD). A helical transmembrane segment spans residues 66-86 (LPIGLLSLIHLLKLLMIAFIA). Residues 87 to 110 (TDIFISWRGWDDIICKFLVYLYRS) are Extracellular-facing. C101 and C188 are disulfide-bonded. The helical transmembrane segment at 111 to 130 (FRGLSLCTTCMLSVLQAITL) threads the bilayer. Topologically, residues 131–150 (SPRSSCLAKFKHKSPHHVSC) are cytoplasmic. A helical membrane pass occupies residues 151 to 171 (AILSLSVLYMFISSHLLVSLI). Over 172 to 203 (ATPNLTTNVFMYVSESCSILPMSYLMQSMFST) the chain is Extracellular. N175 carries N-linked (GlcNAc...) asparagine glycosylation. Residues 204–224 (LLAIRDVFLISLMVLSTCYMV) traverse the membrane as a helical segment. Residues 225–254 (ALLCRHRKQTRHLQGTSLSPKASPEKKATH) lie on the Cytoplasmic side of the membrane. A helical membrane pass occupies residues 255-275 (SILMLMSFFVLMSILDSIVSC). At 276 to 285 (SRTMFLYDPT) the chain is on the extracellular side. Residues 286-306 (SYAIQIFVSHIYATVSPFVFM) form a helical membrane-spanning segment. Over 307 to 326 (SNEKHIVNFLRSLCKRVINV) the chain is Cytoplasmic.

Belongs to the G-protein coupled receptor 1 family.

It localises to the cell membrane. In terms of biological role, putative pheromone receptor implicated in the regulation of social as well as reproductive behavior. In Rattus norvegicus (Rat), this protein is Vomeronasal type-1 receptor 94 (Vom1r94).